The chain runs to 149 residues: Nucleoside diphosphate kinase (149 aa).

ATP contacts are provided by K9, F57, R85, T91, R102, and N112. H115 (pros-phosphohistidine intermediate) is an active-site residue.

Belongs to the NDK family. In terms of assembly, homotetramer. Mg(2+) serves as cofactor.

It is found in the cytoplasm. It catalyses the reaction a 2'-deoxyribonucleoside 5'-diphosphate + ATP = a 2'-deoxyribonucleoside 5'-triphosphate + ADP. The enzyme catalyses a ribonucleoside 5'-diphosphate + ATP = a ribonucleoside 5'-triphosphate + ADP. Major role in the synthesis of nucleoside triphosphates other than ATP. The ATP gamma phosphate is transferred to the NDP beta phosphate via a ping-pong mechanism, using a phosphorylated active-site intermediate. The sequence is that of Nucleoside diphosphate kinase from Cyanothece sp. (strain PCC 7425 / ATCC 29141).